Reading from the N-terminus, the 417-residue chain is UDP-N-acetylglucosamine 1-carboxyvinyltransferase 2 (417 aa).

22–23 (KN) is a phosphoenolpyruvate binding site. Arginine 94 is a binding site for UDP-N-acetyl-alpha-D-glucosamine. Cysteine 118 functions as the Proton donor in the catalytic mechanism. Position 118 is a 2-(S-cysteinyl)pyruvic acid O-phosphothioketal (cysteine 118). UDP-N-acetyl-alpha-D-glucosamine contacts are provided by residues 123–127 (RPIDL), aspartate 306, and isoleucine 328.

This sequence belongs to the EPSP synthase family. MurA subfamily.

The protein localises to the cytoplasm. The catalysed reaction is phosphoenolpyruvate + UDP-N-acetyl-alpha-D-glucosamine = UDP-N-acetyl-3-O-(1-carboxyvinyl)-alpha-D-glucosamine + phosphate. It participates in cell wall biogenesis; peptidoglycan biosynthesis. Functionally, cell wall formation. Adds enolpyruvyl to UDP-N-acetylglucosamine. This Clostridium tetani (strain Massachusetts / E88) protein is UDP-N-acetylglucosamine 1-carboxyvinyltransferase 2.